Consider the following 318-residue polypeptide: Aspartate carbamoyltransferase catalytic subunit (318 aa).

Carbamoyl phosphate is bound by residues arginine 58 and threonine 59. Lysine 86 contributes to the L-aspartate binding site. Positions 108, 141, and 144 each coordinate carbamoyl phosphate. L-aspartate contacts are provided by arginine 174 and arginine 226. Carbamoyl phosphate is bound by residues glycine 270 and proline 271.

The protein belongs to the aspartate/ornithine carbamoyltransferase superfamily. ATCase family. In terms of assembly, heterododecamer (2C3:3R2) of six catalytic PyrB chains organized as two trimers (C3), and six regulatory PyrI chains organized as three dimers (R2).

It carries out the reaction carbamoyl phosphate + L-aspartate = N-carbamoyl-L-aspartate + phosphate + H(+). The protein operates within pyrimidine metabolism; UMP biosynthesis via de novo pathway; (S)-dihydroorotate from bicarbonate: step 2/3. Functionally, catalyzes the condensation of carbamoyl phosphate and aspartate to form carbamoyl aspartate and inorganic phosphate, the committed step in the de novo pyrimidine nucleotide biosynthesis pathway. This is Aspartate carbamoyltransferase catalytic subunit from Lactobacillus helveticus (strain DPC 4571).